Here is a 203-residue protein sequence, read N- to C-terminus: Kunitz trypsin inhibitor 6 (203 aa).

Positions methionine 1 to glycine 21 are cleaved as a signal peptide. Residues cysteine 70 and cysteine 115 are joined by a disulfide bond. 5 N-linked (GlcNAc...) asparagine glycosylation sites follow: asparagine 94, asparagine 127, asparagine 136, asparagine 144, and asparagine 197.

It belongs to the protease inhibitor I3 (leguminous Kunitz-type inhibitor) family.

In terms of biological role, exhibits Kunitz trypsin protease inhibitor activity. This chain is Kunitz trypsin inhibitor 6, found in Arabidopsis thaliana (Mouse-ear cress).